A 130-amino-acid chain; its full sequence is Small ribosomal subunit protein uS8 (130 aa).

This sequence belongs to the universal ribosomal protein uS8 family. Part of the 30S ribosomal subunit. Contacts proteins S5 and S12.

In terms of biological role, one of the primary rRNA binding proteins, it binds directly to 16S rRNA central domain where it helps coordinate assembly of the platform of the 30S subunit. The protein is Small ribosomal subunit protein uS8 of Saccharophagus degradans (strain 2-40 / ATCC 43961 / DSM 17024).